Consider the following 259-residue polypeptide: Deoxyribose-phosphate aldolase (259 aa).

Catalysis depends on aspartate 102, which acts as the Proton donor/acceptor. Lysine 167 serves as the catalytic Schiff-base intermediate with acetaldehyde. The active-site Proton donor/acceptor is the lysine 201.

Belongs to the DeoC/FbaB aldolase family. DeoC type 2 subfamily.

It localises to the cytoplasm. The enzyme catalyses 2-deoxy-D-ribose 5-phosphate = D-glyceraldehyde 3-phosphate + acetaldehyde. The protein operates within carbohydrate degradation; 2-deoxy-D-ribose 1-phosphate degradation; D-glyceraldehyde 3-phosphate and acetaldehyde from 2-deoxy-alpha-D-ribose 1-phosphate: step 2/2. In terms of biological role, catalyzes a reversible aldol reaction between acetaldehyde and D-glyceraldehyde 3-phosphate to generate 2-deoxy-D-ribose 5-phosphate. This chain is Deoxyribose-phosphate aldolase, found in Edwardsiella ictaluri (strain 93-146).